The sequence spans 378 residues: UPF0754 membrane protein BALH_0780 (378 aa).

2 helical membrane passes run 1 to 21 (MNIW…GGFT) and 357 to 377 (YLGA…LLFL).

Belongs to the UPF0754 family.

It is found in the cell membrane. This Bacillus thuringiensis (strain Al Hakam) protein is UPF0754 membrane protein BALH_0780.